Here is a 504-residue protein sequence, read N- to C-terminus: Xanthotoxol synthase (504 aa).

Residues 3–23 traverse the membrane as a helical segment; the sequence is PAAIFLILAIPIASVYLLFYH. Positions 363–368 are substrate specificity; the sequence is PGPLLI. C444 serves as a coordination point for heme.

This sequence belongs to the cytochrome P450 family. The cofactor is heme.

The protein localises to the microsome membrane. The catalysed reaction is psoralen + reduced [NADPH--hemoprotein reductase] + O2 = xanthotoxol + oxidized [NADPH--hemoprotein reductase] + H2O + H(+). It carries out the reaction 6-methoxycoumarin + reduced [NADPH--hemoprotein reductase] + O2 = scopoletin + oxidized [NADPH--hemoprotein reductase] + H2O + H(+). Its pathway is secondary metabolite biosynthesis. In terms of biological role, involved in the biosynthesis of coumarins and furanocoumarins (FCs), natural products required for defense responses against attacks by predators with potential medical and agroindustrial usages such as anticoagulant, rodenticide and artificial vanilla substitutes. Catalyzes the conversion of psoralen into xanthotoxol and of 6-methoxycoumarin into scopoletin. Can also convert with a lower efficiency scopoletin into fraxetin and 7-methoxycoumarin into daphnetin-7-methylether, and use 7-methoxy-3-methylcoumarin as substrate. The chain is Xanthotoxol synthase from Pastinaca sativa (Wild parsnip).